A 555-amino-acid polypeptide reads, in one-letter code: Potassium-transporting ATPase potassium-binding subunit (555 aa).

A run of 10 helical transmembrane segments spans residues 2-22, 60-80, 130-150, 173-193, 246-266, 278-298, 374-394, 412-432, 483-503, and 525-545; these read IWVA…PTGI, QYAL…YFIF, IGIT…VMAF, VFLP…VPQT, MSNI…PFTY, ILFV…TTSE, AGFV…GLMV, LIAV…ALAL, LVMF…AASL, and GIFI…MLVL.

This sequence belongs to the KdpA family. In terms of assembly, the system is composed of three essential subunits: KdpA, KdpB and KdpC.

The protein localises to the cell membrane. Its function is as follows. Part of the high-affinity ATP-driven potassium transport (or Kdp) system, which catalyzes the hydrolysis of ATP coupled with the electrogenic transport of potassium into the cytoplasm. This subunit binds the extracellular potassium ions and delivers the ions to the membrane domain of KdpB through an intramembrane tunnel. The protein is Potassium-transporting ATPase potassium-binding subunit of Bacillus mycoides (strain KBAB4) (Bacillus weihenstephanensis).